The sequence spans 392 residues: Protein DJ-1 homolog A (392 aa).

2 consecutive PfpI endopeptidase domains span residues 6 to 174 (KTVL…EQLF) and 212 to 378 (PQIL…EKFY).

It belongs to the peptidase C56 family. As to quaternary structure, homodimer. Interacts with CSD1 and GPX2.

It localises to the cytoplasm. The protein localises to the cytosol. Its subcellular location is the nucleus. Involved in oxidative stress response. Confers protection against diverse stresses by binding both CSD1 and GPX2 and mediating the cytosolic activation of the Cu-Zn-dependent superoxide dismutase activity of CSD1. This is Protein DJ-1 homolog A (DJ1A) from Arabidopsis thaliana (Mouse-ear cress).